The following is a 385-amino-acid chain: Ribosomal RNA large subunit methyltransferase G (385 aa).

Belongs to the methyltransferase superfamily. RlmG family.

Its subcellular location is the cytoplasm. The enzyme catalyses guanosine(1835) in 23S rRNA + S-adenosyl-L-methionine = N(2)-methylguanosine(1835) in 23S rRNA + S-adenosyl-L-homocysteine + H(+). Specifically methylates the guanine in position 1835 (m2G1835) of 23S rRNA. This Vibrio parahaemolyticus serotype O3:K6 (strain RIMD 2210633) protein is Ribosomal RNA large subunit methyltransferase G.